A 308-amino-acid polypeptide reads, in one-letter code: Ribosomal protein L11 methyltransferase (308 aa).

S-adenosyl-L-methionine-binding residues include Thr-157, Gly-178, Asp-200, and Asn-243.

This sequence belongs to the methyltransferase superfamily. PrmA family.

The protein resides in the cytoplasm. The catalysed reaction is L-lysyl-[protein] + 3 S-adenosyl-L-methionine = N(6),N(6),N(6)-trimethyl-L-lysyl-[protein] + 3 S-adenosyl-L-homocysteine + 3 H(+). Methylates ribosomal protein L11. The protein is Ribosomal protein L11 methyltransferase of Pelotomaculum thermopropionicum (strain DSM 13744 / JCM 10971 / SI).